A 360-amino-acid chain; its full sequence is MLVWLAEYLVKFYSGFNVFSYLTFRAIVSLLTALFISLWMGPHLIAWLQKLQIGQVVRNDGPESHFSKRGTPTMGGLMILFSITISVLMWAYPSNPYVWCVLFILIGYGIVGFIDDYRKVVRKNTKGLIARWKYFWQSIIALAAAFTMYSIGKDTSATELVVPFFKDIMPQLGLLYVLLAYFVIVGTSNAVNLTDGLDGLAIMPTVFVAAGFALVAWATGNVNFAAYLHIPYLRHAGELVIVCTAIVGAGLGFLWFNTYPAQVFMGDVGSLALGGALGTIAVLLRQEFLLVIMGGVFVVETLSVILQVGSFKLRGQRIFRMAPIHHHYELKGWPEPRVIVRFWIISLMLVLIGLATLKLR.

The next 10 helical transmembrane spans lie at 27–47, 72–92, 94–114, 132–152, 168–188, 199–219, 236–256, 263–283, 288–308, and 338–358; these read IVSL…LIAW, PTMG…MWAY, SNPY…VGFI, WKYF…YSIG, IMPQ…VGTS, GLAI…AWAT, AGEL…FLWF, VFMG…IAVL, FLLV…ILQV, and VIVR…ATLK.

It belongs to the glycosyltransferase 4 family. MraY subfamily. Requires Mg(2+) as cofactor.

It is found in the cell inner membrane. It carries out the reaction UDP-N-acetyl-alpha-D-muramoyl-L-alanyl-gamma-D-glutamyl-meso-2,6-diaminopimeloyl-D-alanyl-D-alanine + di-trans,octa-cis-undecaprenyl phosphate = di-trans,octa-cis-undecaprenyl diphospho-N-acetyl-alpha-D-muramoyl-L-alanyl-D-glutamyl-meso-2,6-diaminopimeloyl-D-alanyl-D-alanine + UMP. It functions in the pathway cell wall biogenesis; peptidoglycan biosynthesis. Catalyzes the initial step of the lipid cycle reactions in the biosynthesis of the cell wall peptidoglycan: transfers peptidoglycan precursor phospho-MurNAc-pentapeptide from UDP-MurNAc-pentapeptide onto the lipid carrier undecaprenyl phosphate, yielding undecaprenyl-pyrophosphoryl-MurNAc-pentapeptide, known as lipid I. The protein is Phospho-N-acetylmuramoyl-pentapeptide-transferase of Yersinia pestis bv. Antiqua (strain Angola).